A 1046-amino-acid polypeptide reads, in one-letter code: Protein HBT1 (1046 aa).

Disordered regions lie at residues 1–455 (MNMN…AAEK), 469–894 (DYQQ…LGGA), and 908–1046 (PSLI…RSEI). Position 41 is a phosphoserine (S41). Residues 81–96 (KDSETPHEDTEADANR) are compositionally biased toward basic and acidic residues. Polar residues-rich tracts occupy residues 98–149 (ANVT…SPPT), 175–191 (IATTHNHSTSKAATSPV), and 228–301 (ANTG…NTDS). S303 bears the Phosphoserine mark. A compositionally biased stretch (polar residues) spans 327–341 (VYTSTGPKSNVSSGM). S363 is modified (phosphoserine). 2 stretches are compositionally biased toward polar residues: residues 389-408 (QTGLKNDQVSGSDAIQQQTM) and 420-429 (GFVSQQPSYH). A compositionally biased stretch (basic and acidic residues) spans 430–455 (DSNKNIQHPEKNKVDNKNISERAAEK). The segment covering 488–498 (YSSSAGKNKNL) has biased composition (polar residues). S491 bears the Phosphoserine mark. The span at 529 to 538 (GHMKYNDNGR) shows a compositional bias: basic and acidic residues. The segment covering 548–559 (QAGSQNTNNNID) has biased composition (polar residues). S561 carries the phosphoserine modification. Polar residues predominate over residues 570–582 (GLSNDATTRNNVV). A compositionally biased stretch (basic and acidic residues) spans 586 to 597 (MKDEDMNEDSTK). The span at 605–619 (YLDDVEDYHENDIDD) shows a compositional bias: acidic residues. Positions 621 to 630 (SNAKKNDLYS) are enriched in basic and acidic residues. S671 is modified (phosphoserine). Residues 742-756 (FTNNPETGTTGNVDT) show a composition bias toward polar residues. Residues 773 to 782 (DDSKNTDTHL) show a composition bias toward basic and acidic residues. Polar residues-rich tracts occupy residues 792–802 (NSRSGDTTYSK) and 837–855 (SSEQKASYGSGGNSQNQEY). At Y855 the chain carries Phosphotyrosine. Residue S857 is modified to Phosphoserine. A compositionally biased stretch (basic and acidic residues) spans 868–890 (KVLEEDAPGYKREVDLKNKRRTD). The segment covering 922–951 (DTNTSSSQKPSEGTYPETTSYSIHNETTSQ) has biased composition (polar residues). Low complexity predominate over residues 952 to 963 (GRKVSVGSMGSG). The segment covering 964–976 (KSKHHHNHHRHSR) has biased composition (basic residues). At S1005 the chain carries Phosphoserine. Over residues 1006 to 1019 (DEGEQDYHDDEQGE) the composition is skewed to acidic residues. At S1034 the chain carries Phosphoserine.

In terms of assembly, conjugated with HUB1. HUB1 has not the classical C-terminal Gly residue, so it is still unknown how conjugation may occur.

The protein localises to the cytoplasm. Functionally, polarity-determining protein which forms a conjugate with the ubiquitin-like modifier HUB1. Involved in bud site selection and cellular morphogenesis during conjugation. Required for survival during stationary phase. In Saccharomyces cerevisiae (strain ATCC 204508 / S288c) (Baker's yeast), this protein is Protein HBT1 (HBT1).